The chain runs to 156 residues: Small ribosomal subunit protein uS7 (156 aa).

Belongs to the universal ribosomal protein uS7 family. Part of the 30S ribosomal subunit. Contacts proteins S9 and S11.

One of the primary rRNA binding proteins, it binds directly to 16S rRNA where it nucleates assembly of the head domain of the 30S subunit. Is located at the subunit interface close to the decoding center, probably blocks exit of the E-site tRNA. The chain is Small ribosomal subunit protein uS7 from Bradyrhizobium diazoefficiens (strain JCM 10833 / BCRC 13528 / IAM 13628 / NBRC 14792 / USDA 110).